Reading from the N-terminus, the 74-residue chain is Putative membrane protein insertion efficiency factor (74 aa).

Belongs to the UPF0161 family.

The protein localises to the cell membrane. Could be involved in insertion of integral membrane proteins into the membrane. The chain is Putative membrane protein insertion efficiency factor from Anoxybacillus flavithermus (strain DSM 21510 / WK1).